The primary structure comprises 127 residues: MRTQRAGLSAIVATYRYQLATGIVYRDISSTIATEKKIPFVENAVLKERAFIETIKQHQEPQRRIPRPVDSYVMLHSNARITTSRVIPQHRYKVTAKNPCRSIKRNAFQTAPSQTQSFISVNNRWLG.

This is an uncharacterized protein from Human cytomegalovirus (strain Toledo) (HHV-5).